Here is a 194-residue protein sequence, read N- to C-terminus: Fibroblast growth factor 7 (194 aa).

The N-terminal stretch at 1–31 (MRKWILTWILPSLLHRSCFHIICLVGTLSLD) is a signal peptide. A glycan (N-linked (GlcNAc...) asparagine) is linked at N45.

The protein belongs to the heparin-binding growth factors family. Interacts with FGFBP1. Interacts with FGFR2. Affinity between fibroblast growth factors (FGFs) and their receptors is increased by heparan sulfate glycosaminoglycans that function as coreceptors.

It localises to the secreted. Functionally, plays an important role in the regulation of embryonic development, cell proliferation and cell differentiation. Required for normal branching morphogenesis. Growth factor active on keratinocytes. Possible major paracrine effector of normal epithelial cell proliferation. In Sus scrofa (Pig), this protein is Fibroblast growth factor 7 (FGF7).